Here is a 534-residue protein sequence, read N- to C-terminus: MAVESRAVSTPVPQNSQEQELILVKVEESRSWGQKLKQSGSARSCQELFRQQFRKFCYQETPGPREALGRLQELCYQWLRPELHTKEQILELLVLEQFLSILPEELQIWVQQHSPKNGEEAVTLLEDLEREFDDPGQQVPATPQGPPMPWKDLTCLGAAQEFTHIQRQPLKKQLKPWEPCLPPKSGCENNESAIKKDISGEKSQRLSQEPSFGGFSEHKSSLEWQQGSAPGETLRRSPSQRASFSPVIFTHKLLANRDHPEPQRNLILSTNSVTYQKVPTEERPYRCDICGHSFKQHSSLTQHQRIHTGEKPYKCNQCGKAFSLRSYLIIHQRIHSGEKAYECSECGKAFNQSSALIRHRKIHTGEKACKCNECGKAFSQSSYLIIHQRIHTGEKPYECNECGKTFSQSSKLIRHQRIHTGERPYECNECGKAFRQSSELITHQRIHSGEKPYECNECGKAFSLSSNLIRHQRIHSGEEPYQCNECGKTFKRSSALVQHQRIHSGEEAYICSECGKAFRHRSVLTRHQRVHTVK.

Ser-31 bears the Phosphoserine mark. The region spanning 50 to 132 (RQQFRKFCYQ…TLLEDLEREF (83 aa)) is the SCAN box domain. Residues Lys-55, Lys-171, Lys-202, and Lys-252 each participate in a glycyl lysine isopeptide (Lys-Gly) (interchain with G-Cter in SUMO2) cross-link. Residues 197–242 (DISGEKSQRLSQEPSFGGFSEHKSSLEWQQGSAPGETLRRSPSQRA) form a disordered region. 9 consecutive C2H2-type zinc fingers follow at residues 285–307 (YRCD…QRIH), 313–335 (YKCN…QRIH), 341–363 (YECS…RKIH), 369–391 (CKCN…QRIH), 397–419 (YECN…QRIH), 425–447 (YECN…QRIH), 453–475 (YECN…QRIH), 481–503 (YQCN…QRIH), and 509–531 (YICS…QRVH).

The protein belongs to the krueppel C2H2-type zinc-finger protein family.

It is found in the nucleus. Its function is as follows. DNA-dependent transcriptional repressor. This is Zinc finger protein 397 (ZNF397) from Bos taurus (Bovine).